Consider the following 103-residue polypeptide: Small ribosomal subunit protein uS10 (103 aa).

The protein belongs to the universal ribosomal protein uS10 family. Part of the 30S ribosomal subunit.

Functionally, involved in the binding of tRNA to the ribosomes. This chain is Small ribosomal subunit protein uS10, found in Novosphingobium aromaticivorans (strain ATCC 700278 / DSM 12444 / CCUG 56034 / CIP 105152 / NBRC 16084 / F199).